The primary structure comprises 447 residues: KICSTOR complex protein ITFG2 (447 aa).

The stretch at 19 to 48 (FPHAICLGDVDNDTLNELVVGDTSGKVSVY) is one FG-GAP 1; atypical repeat. Position 104 is a phosphoserine (Ser104). The stretch at 126 to 155 (NTKVMLISDIDGDGCRELVVGYTDRVVRAF) is one FG-GAP 2; atypical repeat. Phosphoserine is present on Ser220.

Part of the KICSTOR complex composed of KPTN, ITFG2, KICS2 and SZT2. SZT2 probably serves as a link between the other three proteins in the KICSTOR complex and may mediate the direct interaction with the GATOR complex via GATOR1. The KICSTOR complex interacts directly with the GATOR1 complex and most probably indirectly with the GATOR2 complex in an amino acid-independent manner.

The protein localises to the lysosome membrane. Functionally, as part of the KICSTOR complex functions in the amino acid-sensing branch of the TORC1 signaling pathway. Recruits, in an amino acid-independent manner, the GATOR1 complex to the lysosomal membranes and allows its interaction with GATOR2 and the RAG GTPases. Functions upstream of the RAG GTPases and is required to negatively regulate mTORC1 signaling in absence of amino acids. In absence of the KICSTOR complex mTORC1 is constitutively localized to the lysosome and activated. The KICSTOR complex is also probably involved in the regulation of mTORC1 by glucose. In Homo sapiens (Human), this protein is KICSTOR complex protein ITFG2.